Consider the following 297-residue polypeptide: Aspartate carbamoyltransferase catalytic subunit (297 aa).

Carbamoyl phosphate-binding residues include arginine 49 and threonine 50. Lysine 77 lines the L-aspartate pocket. Carbamoyl phosphate contacts are provided by arginine 99, histidine 129, and glutamine 132. Residues arginine 162 and arginine 215 each coordinate L-aspartate. The carbamoyl phosphate site is built by glycine 256 and proline 257.

Belongs to the aspartate/ornithine carbamoyltransferase superfamily. ATCase family. As to quaternary structure, heterododecamer (2C3:3R2) of six catalytic PyrB chains organized as two trimers (C3), and six regulatory PyrI chains organized as three dimers (R2).

The enzyme catalyses carbamoyl phosphate + L-aspartate = N-carbamoyl-L-aspartate + phosphate + H(+). Its pathway is pyrimidine metabolism; UMP biosynthesis via de novo pathway; (S)-dihydroorotate from bicarbonate: step 2/3. Functionally, catalyzes the condensation of carbamoyl phosphate and aspartate to form carbamoyl aspartate and inorganic phosphate, the committed step in the de novo pyrimidine nucleotide biosynthesis pathway. The polypeptide is Aspartate carbamoyltransferase catalytic subunit (Legionella pneumophila (strain Lens)).